We begin with the raw amino-acid sequence, 309 residues long: Homoserine kinase (309 aa).

Residue 91-101 coordinates ATP; it reads PIGSGLGSSAC.

It belongs to the GHMP kinase family. Homoserine kinase subfamily.

The protein resides in the cytoplasm. It catalyses the reaction L-homoserine + ATP = O-phospho-L-homoserine + ADP + H(+). It functions in the pathway amino-acid biosynthesis; L-threonine biosynthesis; L-threonine from L-aspartate: step 4/5. Catalyzes the ATP-dependent phosphorylation of L-homoserine to L-homoserine phosphate. In Citrobacter koseri (strain ATCC BAA-895 / CDC 4225-83 / SGSC4696), this protein is Homoserine kinase.